The primary structure comprises 82 residues: Cytotoxin 6 (82 aa).

The N-terminal stretch at 1-21 (MKTLLLTLVVVTIVCLDLGYT) is a signal peptide. 4 cysteine pairs are disulfide-bonded: Cys-24-Cys-42, Cys-35-Cys-59, Cys-63-Cys-74, and Cys-75-Cys-80.

Belongs to the three-finger toxin family. Short-chain subfamily. Type IA cytotoxin sub-subfamily. Monomer in solution; Homodimer and oligomer in the presence of negatively charged lipids forming a pore with a size ranging between 20 and 30 Angstroms. As to expression, expressed by the venom gland.

Its subcellular location is the secreted. The protein resides in the target cell membrane. Its function is as follows. Shows cytolytic activity on many different cells by forming pore in lipid membranes. In vivo, increases heart rate or kills the animal by cardiac arrest. In addition, it binds to heparin with high affinity, interacts with Kv channel-interacting protein 1 (KCNIP1) in a calcium-independent manner, and binds to integrin alpha-V/beta-3 (ITGAV/ITGB3) with moderate affinity. This Naja atra (Chinese cobra) protein is Cytotoxin 6.